A 493-amino-acid chain; its full sequence is Insulinoma-associated protein 2 (493 aa).

Residues 1 to 12 (MPRGFLVKRTKR) show a composition bias toward basic residues. The interval 1-20 (MPRGFLVKRTKRSGSSYRAR) is SNAG domain. A disordered region spans residues 1-77 (MPRGFLVKRT…PGPSPARPAG (77 aa)). Residues 203–223 (FICQLCKHQYADPFALAQHRC) form a C2H2-type 1; atypical zinc finger. Residues 231-253 (YRCPECDKVFSCPANLASHRRWH) form a C2H2-type 2 zinc finger. The tract at residues 248-310 (SHRRWHKPRP…SGDGQHRDSA (63 aa)) is disordered. A compositionally biased stretch (pro residues) spans 267–276 (PHAPLTPPDP). A compositionally biased stretch (basic and acidic residues) spans 283 to 294 (ENGRVPRTDDQH). C2H2-type zinc fingers lie at residues 354 to 376 (FVCPYCHKKFRRQAYLRKHLGTH), 398 to 420 (FACPLCGAHFPSADIREKHRLWH), and 452 to 475 (FSCKYCPSTFFSSPGLTRHINKCH).

Expressed in spleen, stomach, liver, kidney and testis. In the pancreas, expressed in islet cells, including insulin-producing beta-cells, but not in acinar cells (at protein level). In the brain, expressed in the neuronal cells of the cerebral cortex, the Purkinje cells of the cerebellum and the hippocampal region including CA1 and CA3 (at protein level).

It localises to the cytoplasm. It is found in the nucleus. In terms of biological role, may function as a growth suppressor or tumor suppressor in liver cells and in certain neurons. The sequence is that of Insulinoma-associated protein 2 (Insm2) from Mus musculus (Mouse).